The following is a 371-amino-acid chain: Cytochrome b (371 aa).

The next 4 membrane-spanning stretches (helical) occupy residues 25 to 45 (FGSM…FLAV), 69 to 90 (WMMQ…YIHI), 105 to 125 (WLSG…GYVL), and 170 to 190 (FFAL…LHIM). The heme b site is built by His75 and His89. Heme b-binding residues include His174 and His188. An a ubiquinone-binding site is contributed by His193. A run of 4 helical transmembrane segments spans residues 218-238 (YKDL…VSFL), 280-300 (LGGA…PFTH), 312-332 (IMQL…WAAT), and 339-358 (FTMI…IMNP).

Belongs to the cytochrome b family. In terms of assembly, the cytochrome bc1 complex contains 3 respiratory subunits (MT-CYB, CYC1 and UQCRFS1), 2 core proteins (UQCRC1 and UQCRC2) and probably 6 low-molecular weight proteins. Heme b serves as cofactor.

The protein localises to the mitochondrion inner membrane. Its function is as follows. Component of the ubiquinol-cytochrome c reductase complex (complex III or cytochrome b-c1 complex) that is part of the mitochondrial respiratory chain. The b-c1 complex mediates electron transfer from ubiquinol to cytochrome c. Contributes to the generation of a proton gradient across the mitochondrial membrane that is then used for ATP synthesis. This Eryx miliaris (Desert sand boa) protein is Cytochrome b (MT-CYB).